The sequence spans 138 residues: MSRIVAIDYGRKRTGIAVSDTMQIIANGLTTVPTHELLDFITNYVKQESVERIIIGLPKQMNNEVSENMKNIEPFVRSLKKRLPDMPVEYVDERFTSVLAHRTMLEAGLKKKDRQNKALVDEISATIILQSYLETKRL.

It belongs to the YqgF nuclease family.

It is found in the cytoplasm. Functionally, could be a nuclease involved in processing of the 5'-end of pre-16S rRNA. The sequence is that of Putative pre-16S rRNA nuclease from Bacteroides fragilis (strain ATCC 25285 / DSM 2151 / CCUG 4856 / JCM 11019 / LMG 10263 / NCTC 9343 / Onslow / VPI 2553 / EN-2).